The primary structure comprises 778 residues: MMNYRTSIYVVLSLVIFLNVQRSFVAESSAKRKVHIVYLGEKQHDDPEFVTESHHRMLWSLLGSKEDANDSMVYSYRHGFSGFAAKLTESQAKKIADLPDVVHVIPDSFYKLATTRTWDYLGLSAANPKSLLHETNMGEQIIIGVIDTGVWPESEVFNDSGFGPVPSHWKGGCETGENFNSSNCNKKLIGAKYFINGFLAENESFNSTNSLDFISPRDLDGHGTHVSTIAGGSFVPNISYKGLAGGTVRGGAPRAHIAMYKACWYLDDDDTTTCSSADILKAMDEAMHDGVDVLSISLGSSVPLYGETDIRDGITTGAFHAVLKGITVVCSGGNSGPDSLTVTNTAPWIITVAATTLDRSFATPLTLGNNKVILGQAMYTGPGLGFTSLVYPENPGNSNESFSGTCEELLFNSNRTMEGKVVLCFTTSPYGGAVLSAARYVKRAGGLGVIIARHPGYAIQPCLDDFPCVAVDWELGTDILLYTRSSGSPVVKIQPSKTLVGQPVGTKVATFSSRGPNSIAPAILKPDIAAPGVSILAATTNTTFSDQGFIMLSGTSMAAPAISGVAALLKALHRDWSPAAIRSAIVTTAWKTDPFGEQIFAEGSPPKLADPFDYGGGLVNPEKSANPGLVYDMGLEDYVLYMCSVGYNETSISQLIGKTTVCSNPKPSVLDFNLPSITIPNLKDEVTITRTVTNVGPLNSVYRVTVEPPLGFQVTVTPETLVFNSTTKKVYFKVKVSTTHKTNTGYYFGSLTWSDSLHNVTIPLSVRTQILQNYYDEN.

Residues 1 to 22 form the signal peptide; it reads MMNYRTSIYVVLSLVIFLNVQR. Positions 23 to 113 are cleaved as a propeptide — activation peptide; that stretch reads SFVAESSAKR…VIPDSFYKLA (91 aa). In terms of domain architecture, Inhibitor I9 spans 34-113; the sequence is VHIVYLGEKQ…VIPDSFYKLA (80 aa). Asn-69 carries N-linked (GlcNAc...) asparagine glycosylation. One can recognise a Peptidase S8 domain in the interval 117-625; it reads TWDYLGLSAA…GGLVNPEKSA (509 aa). Asp-147 functions as the Charge relay system in the catalytic mechanism. 4 N-linked (GlcNAc...) asparagine glycosylation sites follow: Asn-158, Asn-180, Asn-202, and Asn-206. His-222 acts as the Charge relay system in catalysis. N-linked (GlcNAc...) asparagine glycosylation is found at Asn-237, Asn-399, Asn-414, and Asn-541. In terms of domain architecture, PA spans 388-483; that stretch reads SLVYPENPGN…ELGTDILLYT (96 aa). The active-site Charge relay system is the Ser-556. 3 N-linked (GlcNAc...) asparagine glycosylation sites follow: Asn-648, Asn-724, and Asn-759.

It belongs to the peptidase S8 family.

The protein localises to the secreted. This chain is Subtilisin-like protease SBT3.6, found in Arabidopsis thaliana (Mouse-ear cress).